Here is a 339-residue protein sequence, read N- to C-terminus: N-acetyl-gamma-glutamyl-phosphate reductase (339 aa).

Residue cysteine 144 is part of the active site.

It belongs to the NAGSA dehydrogenase family. Type 1 subfamily.

The protein localises to the cytoplasm. The catalysed reaction is N-acetyl-L-glutamate 5-semialdehyde + phosphate + NADP(+) = N-acetyl-L-glutamyl 5-phosphate + NADPH + H(+). It participates in amino-acid biosynthesis; L-arginine biosynthesis; N(2)-acetyl-L-ornithine from L-glutamate: step 3/4. In terms of biological role, catalyzes the NADPH-dependent reduction of N-acetyl-5-glutamyl phosphate to yield N-acetyl-L-glutamate 5-semialdehyde. The polypeptide is N-acetyl-gamma-glutamyl-phosphate reductase (Methanobrevibacter smithii (strain ATCC 35061 / DSM 861 / OCM 144 / PS)).